The primary structure comprises 231 residues: Large ribosomal subunit protein uL1 (231 aa).

Belongs to the universal ribosomal protein uL1 family. In terms of assembly, part of the 50S ribosomal subunit.

In terms of biological role, binds directly to 23S rRNA. The L1 stalk is quite mobile in the ribosome, and is involved in E site tRNA release. Its function is as follows. Protein L1 is also a translational repressor protein, it controls the translation of the L11 operon by binding to its mRNA. In Nitrosococcus oceani (strain ATCC 19707 / BCRC 17464 / JCM 30415 / NCIMB 11848 / C-107), this protein is Large ribosomal subunit protein uL1.